The primary structure comprises 83 residues: Acylphosphatase (83 aa).

The region spanning 1–83 (MIEGRVQRVG…TGDDWFEVRY (83 aa)) is the Acylphosphatase-like domain. Catalysis depends on residues Arg12 and Asn30.

Belongs to the acylphosphatase family.

It catalyses the reaction an acyl phosphate + H2O = a carboxylate + phosphate + H(+). This chain is Acylphosphatase (acyP), found in Synechococcus sp. (strain CC9605).